Reading from the N-terminus, the 566-residue chain is Phosphatidylinositol 4-kinase gamma 4 (566 aa).

2 consecutive Ubiquitin-like domains span residues 34 to 111 (TIMI…SDLQ) and 112 to 190 (VLDV…AKVR). The segment covering 250-263 (DGLKSGNSPVRSSE) has biased composition (polar residues). Residues 250–272 (DGLKSGNSPVRSSEGTGGAYFMQ) form a disordered region. One can recognise a PI3K/PI4K catalytic domain in the interval 255 to 547 (GNSPVRSSEG…AVLPGTSEAA (293 aa)). Residues 261 to 267 (SSEGTGG) are G-loop. Residues 262 to 268 (SEGTGGA), Lys-284, and 374 to 377 (QMFT) each bind ATP. The segment at 407–415 (ANADRHGGN) is catalytic loop. The segment at 430–456 (PIDHGYCLPESFEDCTFEWLYWPQARK) is activation loop. ATP is bound at residue Asp-432.

The protein belongs to the PI3/PI4-kinase family. Type II PI4K subfamily. Interacts with RPN10, UFD1 and CDC48 in vitro. Post-translationally, autophosphorylated.

It is found in the membrane. It carries out the reaction a 1,2-diacyl-sn-glycero-3-phospho-(1D-myo-inositol) + ATP = a 1,2-diacyl-sn-glycero-3-phospho-(1D-myo-inositol 4-phosphate) + ADP + H(+). In terms of biological role, the phosphorylation of phosphatidylinositol (PI) to PI4P is the first committed step in the generation of phosphatidylinositol 4,5-bisphosphate (PIP2), a precursor of the second messenger inositol 1,4,5-trisphosphate (InsP3). Undergoes autophosphorylation and phosphorylates serine/threonine residues of protein substrates. Phosphorylates RPN10 and UFD1 in vitro. The sequence is that of Phosphatidylinositol 4-kinase gamma 4 from Arabidopsis thaliana (Mouse-ear cress).